The following is a 290-amino-acid chain: Shikimate kinase (290 aa).

81-91 serves as a coordination point for ATP; sequence PIASGLKSSSA.

The protein belongs to the GHMP kinase family. Archaeal shikimate kinase subfamily.

It is found in the cytoplasm. The enzyme catalyses shikimate + ATP = 3-phosphoshikimate + ADP + H(+). It functions in the pathway metabolic intermediate biosynthesis; chorismate biosynthesis; chorismate from D-erythrose 4-phosphate and phosphoenolpyruvate: step 5/7. In Methanocella arvoryzae (strain DSM 22066 / NBRC 105507 / MRE50), this protein is Shikimate kinase.